A 407-amino-acid chain; its full sequence is Chorismate synthase (407 aa).

NADP(+)-binding residues include Arg40 and Arg46. FMN contacts are provided by residues 135–137 (RAS), 256–257 (QA), Gly300, 315–319 (KPIST), and Arg341.

The protein belongs to the chorismate synthase family. As to quaternary structure, homotetramer. FMNH2 serves as cofactor.

The catalysed reaction is 5-O-(1-carboxyvinyl)-3-phosphoshikimate = chorismate + phosphate. It functions in the pathway metabolic intermediate biosynthesis; chorismate biosynthesis; chorismate from D-erythrose 4-phosphate and phosphoenolpyruvate: step 7/7. Catalyzes the anti-1,4-elimination of the C-3 phosphate and the C-6 proR hydrogen from 5-enolpyruvylshikimate-3-phosphate (EPSP) to yield chorismate, which is the branch point compound that serves as the starting substrate for the three terminal pathways of aromatic amino acid biosynthesis. This reaction introduces a second double bond into the aromatic ring system. This Mycobacterium leprae (strain Br4923) protein is Chorismate synthase.